The primary structure comprises 385 residues: 1-deoxy-D-xylulose 5-phosphate reductoisomerase (385 aa).

NADPH is bound by residues T10, G11, S12, I13, G36, N38, and N122. K123 is a 1-deoxy-D-xylulose 5-phosphate binding site. E124 is a binding site for NADPH. Residue D148 coordinates Mn(2+). 4 residues coordinate 1-deoxy-D-xylulose 5-phosphate: S149, E150, S174, and H197. A Mn(2+)-binding site is contributed by E150. G203 provides a ligand contact to NADPH. 1-deoxy-D-xylulose 5-phosphate is bound by residues S210, N215, K216, and E219. E219 serves as a coordination point for Mn(2+).

Belongs to the DXR family. Mg(2+) is required as a cofactor. Mn(2+) serves as cofactor.

The catalysed reaction is 2-C-methyl-D-erythritol 4-phosphate + NADP(+) = 1-deoxy-D-xylulose 5-phosphate + NADPH + H(+). It participates in isoprenoid biosynthesis; isopentenyl diphosphate biosynthesis via DXP pathway; isopentenyl diphosphate from 1-deoxy-D-xylulose 5-phosphate: step 1/6. In terms of biological role, catalyzes the NADPH-dependent rearrangement and reduction of 1-deoxy-D-xylulose-5-phosphate (DXP) to 2-C-methyl-D-erythritol 4-phosphate (MEP). The polypeptide is 1-deoxy-D-xylulose 5-phosphate reductoisomerase (Citrifermentans bemidjiense (strain ATCC BAA-1014 / DSM 16622 / JCM 12645 / Bem) (Geobacter bemidjiensis)).